The sequence spans 165 residues: Peptidyl-prolyl cis-trans isomerase NIMA-interacting 1 (165 aa).

The WW domain occupies 5 to 39 (EKLPPGWEKRMSRSSGRVYYFNHITNASQWERPSG). Positions 33-56 (QWERPSGGSTVGGSSKNGQGEPAK) are disordered. Lys48 is subject to N6-acetyllysine. Residues 54 to 165 (PAKVRCSHLL…SGIHIILRTE (112 aa)) form the PpiC domain. Ser73 and Ser110 each carry phosphoserine.

Interacts with STIL. Interacts with KIF20B. Interacts with NEK6. Interacts (via WW domain) with PRKX. Interacts with BTK. Interacts (via PpiC domain) with DAPK1. Interacts with the phosphorylated form of RAF1. Interacts (via WW domain) with ATCAY; upon NGF stimulation. Interacts with PML. Interacts with BCL6. Interacts with FBXW7, disrupting FBXW7 dimerization and promoting FBXW7 autoubiquitination and degradation. Directly interacts with RBBP8/CtIP; this interaction depends upon RBBP8 phosphorylation. Interacts (via WW domain) with IRAK3/IRAK-M (when phosphorylated at 'Ser-110') in response to IL33-mediated (but not TLR4 ligand LPS) dendritic cell stimulation. Interacts with PGK1 (when phosphorylated at 'Ser-203'); the interaction is direct, occurs under hypoxic conditions, and targets PGK1 to the mitochondrion by promoting interactions with the TOM complex. In terms of processing, phosphorylation at Ser-73 by DAPK1 results in inhibition of its catalytic activity, nuclear localization, and its ability to induce centrosome amplification, chromosome instability and cell transformation. Ser-73 is dephosphorylated upon IL33-stimulation of dendritic cells. Expressed in dendritic cells (at protein level).

The protein resides in the nucleus. The protein localises to the nucleus speckle. It localises to the cytoplasm. It catalyses the reaction [protein]-peptidylproline (omega=180) = [protein]-peptidylproline (omega=0). Functionally, peptidyl-prolyl cis/trans isomerase (PPIase) that binds to and isomerizes specific phosphorylated Ser/Thr-Pro (pSer/Thr-Pro) motifs. By inducing conformational changes in a subset of phosphorylated proteins, acts as a molecular switch in multiple cellular processes. Displays a preference for an acidic residue N-terminal to the isomerized proline bond. Regulates mitosis presumably by interacting with NIMA and attenuating its mitosis-promoting activity. Down-regulates kinase activity of BTK. Can transactivate multiple oncogenes and induce centrosome amplification, chromosome instability and cell transformation. Required for the efficient dephosphorylation and recycling of RAF1 after mitogen activation. Binds and targets PML and BCL6 for degradation in a phosphorylation-dependent manner. Acts as a regulator of JNK cascade by binding to phosphorylated FBXW7, disrupting FBXW7 dimerization and promoting FBXW7 autoubiquitination and degradation: degradation of FBXW7 leads to subsequent stabilization of JUN. May facilitate the ubiquitination and proteasomal degradation of RBBP8/CtIP through CUL3/KLHL15 E3 ubiquitin-protein ligase complex, hence favors DNA double-strand repair through error-prone non-homologous end joining (NHEJ) over error-free, RBBP8-mediated homologous recombination (HR). Upon IL33-induced lung inflammation, catalyzes cis-trans isomerization of phosphorylated IRAK3/IRAK-M, inducing IRAK3 stabilization, nuclear translocation and expression of pro-inflammatory genes in dendritic cells. Catalyzes cis-trans isomerization of phosphorylated phosphoglycerate kinase PGK1 under hypoxic conditions to promote its binding to the TOM complex and targeting to the mitochondrion. This is Peptidyl-prolyl cis-trans isomerase NIMA-interacting 1 (Pin1) from Mus musculus (Mouse).